Here is a 295-residue protein sequence, read N- to C-terminus: Delta-1-pyrroline-5-carboxylate reductase apf3 (295 aa).

This sequence belongs to the pyrroline-5-carboxylate reductase family.

The protein operates within secondary metabolite biosynthesis. Functionally, delta-1-pyrroline-5-carboxylate reductase; part of the gene cluster that mediates the biosynthesis of the cyclic tetrapeptide apicidin F (APF). The non-ribosomal peptide synthetase apf1 incorporates four different amino acids to produce apicidin F: L-phenylalanine, D-pipecolic acid (D-pip), N-methoxy-L-tryptophan and L-2-aminooctanedioic acid. L-Phenylalanine is the only proteinogenic amino acid directly used by apf1. The 3 other apf1 substrates are non-proteinogenic and have to be modified by other enzymes of the cluster. Lysine is converted to delta-1-pyrroline-5-carboxylate (P5C) which is reduced to L-pipecolic acid (L-pip) by apf3. L-pip is epimerized to D-pip, probably by apf1 activity, prior to incorporation. L-Tryptophan is N-oxidyzed by one of the cytochrome P450 monooxygenases (apf7 or apf8), and further methylated at the hydroxy group by the O-methyltransferase apf6 to yield N-methoxy-L-tryptophan. The synthesis of the fourth apf1 substrate is more complex. The fatty acid synthase apf5 is involved in the synthesis of the octanoic acid backbone of L-2-aminooctanedioic acid by fixing one acetyl-CoA unit and three malonyl-CoA units. Then one of the cytochrome P450 monooxygenases (apf7 or apf8) may oxidize this backbone to 2-oxooctanoic acid. The aminotransferase apf4 is predicted to catalyze the exchange of the keto group with an amino group. The next step would be the oxidation of 2-aminooctanoic acid by one of the cytochrome P450 monooxygenases (apf7 or apf8). The last step is the oxidation of 2-amino-8-hydroxyoctanoic acid to 2-aminooctanedioic acid is catalyzed by the FAD-dependent monooxygenase apf9. The sequence is that of Delta-1-pyrroline-5-carboxylate reductase apf3 from Gibberella fujikuroi (strain CBS 195.34 / IMI 58289 / NRRL A-6831) (Bakanae and foot rot disease fungus).